Reading from the N-terminus, the 338-residue chain is Ketol-acid reductoisomerase (NADP(+)) (338 aa).

Residues 2 to 182 (TKMYYEEDTD…GGARAGVLET (181 aa)) enclose the KARI N-terminal Rossmann domain. NADP(+) contacts are provided by residues 25 to 28 (YGSQ), Ser51, Ser53, and 83 to 86 (DELQ). The active site involves His108. NADP(+) is bound at residue Gly134. A KARI C-terminal knotted domain is found at 183–330 (TFRTETETDL…SEIRKLYCWN (148 aa)). Mg(2+)-binding residues include Asp191, Glu195, Glu227, and Glu231. Substrate is bound at residue Ser252.

The protein belongs to the ketol-acid reductoisomerase family. Mg(2+) serves as cofactor.

It catalyses the reaction (2R)-2,3-dihydroxy-3-methylbutanoate + NADP(+) = (2S)-2-acetolactate + NADPH + H(+). The catalysed reaction is (2R,3R)-2,3-dihydroxy-3-methylpentanoate + NADP(+) = (S)-2-ethyl-2-hydroxy-3-oxobutanoate + NADPH + H(+). It participates in amino-acid biosynthesis; L-isoleucine biosynthesis; L-isoleucine from 2-oxobutanoate: step 2/4. The protein operates within amino-acid biosynthesis; L-valine biosynthesis; L-valine from pyruvate: step 2/4. Its function is as follows. Involved in the biosynthesis of branched-chain amino acids (BCAA). Catalyzes an alkyl-migration followed by a ketol-acid reduction of (S)-2-acetolactate (S2AL) to yield (R)-2,3-dihydroxy-isovalerate. In the isomerase reaction, S2AL is rearranged via a Mg-dependent methyl migration to produce 3-hydroxy-3-methyl-2-ketobutyrate (HMKB). In the reductase reaction, this 2-ketoacid undergoes a metal-dependent reduction by NADPH to yield (R)-2,3-dihydroxy-isovalerate. This chain is Ketol-acid reductoisomerase (NADP(+)), found in Clostridium botulinum (strain Eklund 17B / Type B).